Here is an 87-residue protein sequence, read N- to C-terminus: Prolactin-releasing peptide (87 aa).

The signal sequence occupies residues 1-22 (MKVLRAWLLCLLMLGLALRGAA). Phenylalanine amide is present on Phe53. Positions 58 to 87 (ATLGDVPKPGLRPRLTCFPLEGGAMSSQDG) are excised as a propeptide.

Medulla oblongata and hypothalamus.

The protein localises to the secreted. Its function is as follows. Stimulates prolactin (PRL) release and regulates the expression of prolactin through its receptor GPR10. May stimulate lactotrophs directly to secrete PRL. In Homo sapiens (Human), this protein is Prolactin-releasing peptide (PRLH).